A 64-amino-acid chain; its full sequence is Large ribosomal subunit protein bL35 (64 aa).

A compositionally biased stretch (basic residues) spans 1-42 (MPKAKTHSGASKRFRRTGTGKIVRQKANRRHLLEHKSSKRTR). The disordered stretch occupies residues 1–64 (MPKAKTHSGA…TKRVKSLLNG (64 aa)).

It belongs to the bacterial ribosomal protein bL35 family.

The polypeptide is Large ribosomal subunit protein bL35 (Mycobacterium ulcerans (strain Agy99)).